A 352-amino-acid polypeptide reads, in one-letter code: Biotin synthase (352 aa).

A Radical SAM core domain is found at 41 to 268 (NEVQVSTLLS…ASHVRLSAGR (228 aa)). [4Fe-4S] cluster contacts are provided by C56, C60, and C63. The [2Fe-2S] cluster site is built by C100, C131, C191, and R263.

The protein belongs to the radical SAM superfamily. Biotin synthase family. As to quaternary structure, homodimer. The cofactor is [4Fe-4S] cluster. [2Fe-2S] cluster serves as cofactor.

It carries out the reaction (4R,5S)-dethiobiotin + (sulfur carrier)-SH + 2 reduced [2Fe-2S]-[ferredoxin] + 2 S-adenosyl-L-methionine = (sulfur carrier)-H + biotin + 2 5'-deoxyadenosine + 2 L-methionine + 2 oxidized [2Fe-2S]-[ferredoxin]. The protein operates within cofactor biosynthesis; biotin biosynthesis; biotin from 7,8-diaminononanoate: step 2/2. Functionally, catalyzes the conversion of dethiobiotin (DTB) to biotin by the insertion of a sulfur atom into dethiobiotin via a radical-based mechanism. This Marinobacter nauticus (strain ATCC 700491 / DSM 11845 / VT8) (Marinobacter aquaeolei) protein is Biotin synthase.